The sequence spans 228 residues: Leucine rich adaptor protein 1-like (228 aa).

Met-1 is modified (N-acetylmethionine). The interval 1–89 (MEDSPLPDLR…GSPRGSHSSA (89 aa)) is disordered. 2 stretches are compositionally biased toward basic and acidic residues: residues 8–21 (DLRDIELKLGRKVP) and 28–42 (LRGEEPVPRERDRDP). Residues 44–56 (GGSGGGGGGGGGC) show a composition bias toward gly residues. Residues 57–88 (SSSSSYCSFPPSLSSSSSSSPTSGSPRGSHSS) are compositionally biased toward low complexity.

This Homo sapiens (Human) protein is Leucine rich adaptor protein 1-like (LURAP1L).